The primary structure comprises 246 residues: Putative protein phosphatase 2C-type (246 aa).

In terms of domain architecture, PPM-type phosphatase spans 2–240; the sequence is KISLKTDIGQ…DNITIALVHN (239 aa). D36, G37, D192, and D231 together coordinate Mn(2+).

The cofactor is Mg(2+). Requires Mn(2+) as cofactor.

It carries out the reaction O-phospho-L-seryl-[protein] + H2O = L-seryl-[protein] + phosphate. The enzyme catalyses O-phospho-L-threonyl-[protein] + H2O = L-threonyl-[protein] + phosphate. The chain is Putative protein phosphatase 2C-type from Streptococcus pyogenes serotype M6 (strain ATCC BAA-946 / MGAS10394).